A 200-amino-acid chain; its full sequence is Large ribosomal subunit protein bL25 (200 aa).

The protein belongs to the bacterial ribosomal protein bL25 family. CTC subfamily. In terms of assembly, part of the 50S ribosomal subunit; part of the 5S rRNA/L5/L18/L25 subcomplex. Contacts the 5S rRNA. Binds to the 5S rRNA independently of L5 and L18.

In terms of biological role, this is one of the proteins that binds to the 5S RNA in the ribosome where it forms part of the central protuberance. The polypeptide is Large ribosomal subunit protein bL25 (Caldicellulosiruptor bescii (strain ATCC BAA-1888 / DSM 6725 / KCTC 15123 / Z-1320) (Anaerocellum thermophilum)).